Consider the following 170-residue polypeptide: MKKLEDLILTYKDFPKKGIEFKDVLEILQYPDIFQDIILKMSSNQFLKKAEAIISIDARGFIFGSAVALESSKPMIVARKPGKLPGQLLTREYDLEYGKNSLSIQVNALKKFNSFVIVDDLLATGGTVKSVSRLIRDQKKKILGLITVVELKSLKGKSKLDFPVHSIVTL.

The protein belongs to the purine/pyrimidine phosphoribosyltransferase family. Homodimer.

Its subcellular location is the cytoplasm. The enzyme catalyses AMP + diphosphate = 5-phospho-alpha-D-ribose 1-diphosphate + adenine. The protein operates within purine metabolism; AMP biosynthesis via salvage pathway; AMP from adenine: step 1/1. Catalyzes a salvage reaction resulting in the formation of AMP, that is energically less costly than de novo synthesis. The polypeptide is Adenine phosphoribosyltransferase (Prochlorococcus marinus (strain AS9601)).